A 228-amino-acid polypeptide reads, in one-letter code: Imidazole glycerol phosphate synthase subunit HisH (228 aa).

The 215-residue stretch at 4 to 218 (DIAVVDYGMG…VTWNPGEHAS (215 aa)) folds into the Glutamine amidotransferase type-1 domain. Residue Cys-83 is the Nucleophile of the active site. Catalysis depends on residues His-193 and Glu-195.

Heterodimer of HisH and HisF.

Its subcellular location is the cytoplasm. It carries out the reaction 5-[(5-phospho-1-deoxy-D-ribulos-1-ylimino)methylamino]-1-(5-phospho-beta-D-ribosyl)imidazole-4-carboxamide + L-glutamine = D-erythro-1-(imidazol-4-yl)glycerol 3-phosphate + 5-amino-1-(5-phospho-beta-D-ribosyl)imidazole-4-carboxamide + L-glutamate + H(+). It catalyses the reaction L-glutamine + H2O = L-glutamate + NH4(+). It functions in the pathway amino-acid biosynthesis; L-histidine biosynthesis; L-histidine from 5-phospho-alpha-D-ribose 1-diphosphate: step 5/9. In terms of biological role, IGPS catalyzes the conversion of PRFAR and glutamine to IGP, AICAR and glutamate. The HisH subunit catalyzes the hydrolysis of glutamine to glutamate and ammonia as part of the synthesis of IGP and AICAR. The resulting ammonia molecule is channeled to the active site of HisF. The chain is Imidazole glycerol phosphate synthase subunit HisH from Thiobacillus denitrificans (strain ATCC 25259 / T1).